An 83-amino-acid chain; its full sequence is Cytochrome b559 subunit alpha (83 aa).

The chain crosses the membrane as a helical span at residues 21-35 (VIHSITIPSLFIAGW). Residue histidine 23 coordinates heme.

It belongs to the PsbE/PsbF family. As to quaternary structure, heterodimer of an alpha subunit and a beta subunit. PSII is composed of 1 copy each of membrane proteins PsbA, PsbB, PsbC, PsbD, PsbE, PsbF, PsbH, PsbI, PsbJ, PsbK, PsbL, PsbM, PsbT, PsbX, PsbY, PsbZ, Psb30/Ycf12, at least 3 peripheral proteins of the oxygen-evolving complex and a large number of cofactors. It forms dimeric complexes. The cofactor is heme b.

It is found in the plastid. It localises to the chloroplast thylakoid membrane. This b-type cytochrome is tightly associated with the reaction center of photosystem II (PSII). PSII is a light-driven water:plastoquinone oxidoreductase that uses light energy to abstract electrons from H(2)O, generating O(2) and a proton gradient subsequently used for ATP formation. It consists of a core antenna complex that captures photons, and an electron transfer chain that converts photonic excitation into a charge separation. This Helianthus annuus (Common sunflower) protein is Cytochrome b559 subunit alpha.